The chain runs to 89 residues: Signal recognition particle 19 kDa protein (89 aa).

The protein belongs to the SRP19 family. As to quaternary structure, part of the signal recognition particle protein translocation system, which is composed of SRP and FtsY. Archaeal SRP consists of a 7S RNA molecule of 300 nucleotides and two protein subunits: SRP54 and SRP19.

The protein localises to the cytoplasm. Involved in targeting and insertion of nascent membrane proteins into the cytoplasmic membrane. Binds directly to 7S RNA and mediates binding of the 54 kDa subunit of the SRP. This chain is Signal recognition particle 19 kDa protein, found in Methanococcus maripaludis (strain C5 / ATCC BAA-1333).